We begin with the raw amino-acid sequence, 421 residues long: F-box only protein 5 (421 aa).

At Ser-85 the chain carries Phosphoserine. The interval 114–219 is interaction with EVI5; sequence ELEASRLYED…IGKKMGLEHL (106 aa). The 51-residue stretch at 223–273 folds into the F-box domain; the sequence is AELSRRGFVHLLANILTKLSGMDLVNLSKVSRIWKKILENNKGAFQLYSKT. The sufficient for interaction with RPS6KA2; Prevents association of CDC20 with RPS6KA2 stretch occupies residues 236 to 313; it reads NILTKLSGMD…KSSTWAPPKK (78 aa). The tract at residues 236–383 is requires for efficient binding to CDC20; sequence NILTKLSGMD…SCQFEYCTKC (148 aa). Residues 280 to 421 are inhibits APC ubiquitin ligase activity; that stretch reads SSKLSLHATT…KKSKKNLQRL (142 aa). The tract at residues 296–299 is competitively blocks access of APC substrates to the D-box coreceptor formed by FZR1 and ANAPC10; that stretch reads RAAL. Residues 348-396 form a ZBR-type zinc finger; it reads SLKACVRCNFPAKYDHYLERAVCKRESCQFEYCTKCLCAYHNNKDCLNG. Zn(2+) contacts are provided by Cys-352, Cys-355, Cys-370, Cys-375, Cys-380, Cys-383, His-388, and Cys-393. The interval 352 to 394 is allows a rapid multiple mono-ubiquitination of the APC substrate, but strongly inhibits the slow ubiquitin chain elongation catalyzed by UBCH10; that stretch reads CVRCNFPAKYDHYLERAVCKRESCQFEYCTKCLCAYHNNKDCL. Positions 411–421 are sufficient to suppress UBE2S activity; essential for interaction with UBE2S; competitively inhibits the rapide ubiquitin chain elongation by UBE2D1 which blocks UBE2D1 with APC; indispensable for recruitment and position of FBXO5 to the catalytic site of APC; abrogates the inhibition of ubiquitin chain assembly primarily catalyzed by UBE2S; inhibits the ubiquitination by either UBE2C or UBE2D1; it reads TKKSKKNLQRL.

Part of a SCF (SKP1-cullin-F-box) protein ligase complex. Interacts with BTRC; mediates proteolysis by the SCF ubiquitin ligase complex leading to activation of APC in late mitosis and subsequent mitotic progression. Interacts with FZR1/CDH1 and the N-terminal substrate-binding domain of CDC20; prevents APC activation. Also interacts with EVI5 which blocks its phosphorylation by PLK1 and prevents its subsequent binding to BTRC and degradation. Interacts simultaneously with anaphase promoting complex (APC), through at least ANAPC2, CDC23, CDC27, the APC substrate GMNN and the APC activator FZR1. Interacts with UBE2S; interferes with the activity of UBE2S mainly by disrupting the dynamic electrostatic association between the C-terminal tail of UBE2S and ANAPC2. Interacts with RPS6KA2; cooperates to induce the metaphase arrest of early blastomeres; increases and stabilizes interaction of FBXO5 with CDC20. Post-translationally, phosphorylation by CDK2 and subsequently by PLK1 triggers degradation during early mitosis through ubiquitin-mediated proteolysis by the SCF ubiquitin ligase complex containing the F-box protein BTRC. This degradation is necessary for the activation of APC in late mitosis and subsequent mitotic progression. Phosphorylated by RPS6KA2; increases and stabilizes interaction with CDC20. Ubiquitinated by the SCF(BTRC) complex following phosphorylation by PLK1. Undergoes both 'Lys-11' and 'Lys-48'-linked polyubiquitination by APC-FZR1 complex leading to degradation during G1 phase by the proteasome. Degraded through the SCF(BTRC) complex; degradation occurs during oocyte maturation, between germinal vesicle breakdown (GVBD) and meiosis I, and is required for the meiosis I-meiosis II transition. Expressed in oocytes and granulosa cells. Expressed in proliferating cells compartments in hair follicle and skin epidermis, spermatogonia, and intestinal crypts.

It localises to the nucleus. It is found in the cytoplasm. The protein localises to the cytoskeleton. Its subcellular location is the spindle. Its pathway is protein modification; protein ubiquitination. In terms of biological role, regulator of APC activity during mitotic and meiotic cell cycle. During mitotic cell cycle plays a role as both substrate and inhibitor of APC-FZR1 complex. During G1 phase, plays a role as substrate of APC-FZR1 complex E3 ligase. Then switches as an inhibitor of APC-FZR1 complex during S and G2 leading to cell-cycle commitment. As APC inhibitor, prevents the degradation of APC substrates at multiple levels: by interacting with APC and blocking access of APC substrates to the D-box co-receptor, formed by FZR1 and ANAPC10; by suppressing ubiquitin ligation and chain elongation by APC by preventing the UBE2C and UBE2S activities. Plays a role in genome integrity preservation by coordinating DNA replication with mitosis through APC inhibition in interphase to stabilize CCNA2 and GMNN in order to promote mitosis and prevent rereplication and DNA damage-induced cellular senescence. During oocyte maturation, plays a role in meiosis through inactivation of APC-FZR1 complex. Inhibits APC through RPS6KA2 interaction that increases FBXO5 affiniy for CDC20 leading to the metaphase arrest of the second meiotic division before fertilization. Controls entry into the first meiotic division through inactivation of APC-FZR1 complex. Promotes migration and osteogenic differentiation of mesenchymal stem cells. The polypeptide is F-box only protein 5 (Mus musculus (Mouse)).